Here is a 74-residue protein sequence, read N- to C-terminus: Kappa-stichotoxin-Hmg1a (74 aa).

An N-terminal signal peptide occupies residues M1–A22. A propeptide spanning residues R23–R39 is cleaved from the precursor. In terms of domain architecture, ShKT spans C42 to C74. 3 disulfide bridges follow: C42–C74, C51–C67, and C56–C71.

Belongs to the sea anemone type 1 potassium channel toxin family. Type 1a subfamily.

The protein localises to the secreted. It is found in the nematocyst. In terms of biological role, potently blocks the voltage-gated potassium channel Kv1.1/KCNA1 (Ki=75 pM), KcsA (Ki~1 nM) and moderately blocks Kv1.2/KCNA2 (Ki=2.5 nM) and Kv1.3/KCNA3 (Ki=3.1 nM). Also facilitates acetylcholine release at the avian neuromuscular junction. Blockade and dissociation rate are sensitive to voltage. This chain is Kappa-stichotoxin-Hmg1a, found in Heteractis magnifica (Magnificent sea anemone).